The primary structure comprises 144 residues: Ig heavy chain V region MOPC 141 (144 aa).

The signal sequence occupies residues 1–19 (MAVLALLFCLATFPSCILS). Residues 20–130 (QVQLKESGPG…YYGRSDKYFT (111 aa)) form the Ig-like domain.

The chain is Ig heavy chain V region MOPC 141 from Mus musculus (Mouse).